The sequence spans 121 residues: Pancreatic progenitor cell differentiation and proliferation factor (121 aa).

Disordered regions lie at residues 22 to 47 (GSTSSNSSCGSSEYAGEVIPHPPGLQ) and 101 to 121 (SRQLSESSDSGKVEQGSPPPS). A compositionally biased stretch (low complexity) spans 23–33 (STSSNSSCGSS). A compositionally biased stretch (polar residues) spans 101-110 (SRQLSESSDS).

This sequence belongs to the PPDPF family.

Its function is as follows. Probable regulator of exocrine pancreas development. This chain is Pancreatic progenitor cell differentiation and proliferation factor (ppdpf), found in Salmo salar (Atlantic salmon).